The chain runs to 95 residues: Protein TusB (95 aa).

This sequence belongs to the DsrH/TusB family. As to quaternary structure, heterohexamer, formed by a dimer of trimers. The hexameric TusBCD complex contains 2 copies each of TusB, TusC and TusD. The TusBCD complex interacts with TusE.

The protein resides in the cytoplasm. In terms of biological role, part of a sulfur-relay system required for 2-thiolation of 5-methylaminomethyl-2-thiouridine (mnm(5)s(2)U) at tRNA wobble positions. This chain is Protein TusB, found in Yersinia enterocolitica serotype O:8 / biotype 1B (strain NCTC 13174 / 8081).